A 706-amino-acid chain; its full sequence is Phenylalanine--tRNA ligase beta subunit, chloroplastic (706 aa).

One can recognise a B5 domain in the interval 300–388 (KVLKPIVLNY…RLHGFNNFLT (89 aa)). Residues Asp366, Asp372, Glu375, and Glu376 each coordinate Mg(2+). An FDX-ACB domain is found at 612 to 705 (SVYPKIVKDL…LELKVQAILR (94 aa)).

The protein belongs to the phenylalanyl-tRNA synthetase beta subunit family. Type 1 subfamily. As to quaternary structure, tetramer of two alpha and two beta subunits. It depends on Mg(2+) as a cofactor.

It localises to the plastid. The protein localises to the chloroplast. It catalyses the reaction tRNA(Phe) + L-phenylalanine + ATP = L-phenylalanyl-tRNA(Phe) + AMP + diphosphate + H(+). In Phaeodactylum tricornutum (strain CCAP 1055/1), this protein is Phenylalanine--tRNA ligase beta subunit, chloroplastic.